Consider the following 420-residue polypeptide: Zinc finger protein Pegasus (420 aa).

Lys-5 participates in a covalent cross-link: Glycyl lysine isopeptide (Lys-Gly) (interchain with G-Cter in SUMO2). 3 consecutive C2H2-type zinc fingers follow at residues 82-104 (LKCR…IRIH), 110-132 (HRCH…MRSH), and 138-161 (YKCE…RRKH). Lys-185 is covalently cross-linked (Glycyl lysine isopeptide (Lys-Gly) (interchain with G-Cter in SUMO2)). Polar residues-rich tracts occupy residues 223–236 (QTDS…TTPT) and 262–273 (LSSLPPENQNPA). Disordered regions lie at residues 223 to 247 (QTDS…QELM) and 262 to 356 (LSSL…PALP). Over residues 290 to 311 (QPSTQAVVSAVSASIPQSSSPT) the composition is skewed to low complexity. A compositionally biased stretch (polar residues) spans 332 to 349 (SEPSAHTSTPSIGNSQPS). The segment at 364-387 (HHCQHCDMYFFADNILYTIHMGCH) adopts a C2H2-type 4; degenerate zinc-finger fold. The C2H2-type 5 zinc finger occupies 393–417 (FQCNICGCKCKNKYDFACHFARGQH).

It belongs to the Ikaros C2H2-type zinc-finger protein family. Self-associates. Interacts with other family members; IKZF1, IKZF2, IKZF3 and IKZF4.

Its subcellular location is the nucleus. Functionally, transcriptional repressor that binds the core 5'GNNTGTNG-3' DNA consensus sequence. Involved in megakaryocyte differentiation. The protein is Zinc finger protein Pegasus (IKZF5) of Pongo abelii (Sumatran orangutan).